The following is a 745-amino-acid chain: Immunoglobulin superfamily containing leucine-rich repeat protein 2 (745 aa).

The N-terminal stretch at 1-18 (MFPLRALWLVWALLGVAG) is a signal peptide. The LRRNT domain maps to 19–51 (SCPEPCACVDKYAHQFADCAYKELREVPEGLPA). Topologically, residues 19 to 589 (SCPEPCACVD…VFSTKKELPS (571 aa)) are extracellular. A glycan (N-linked (GlcNAc...) asparagine) is linked at Asn52. 5 LRR repeats span residues 52–73 (NVTTLSLSANKITVLRRGAFAD), 76–97 (QVTSLWLAHNEVRTVEPGALAV), 100–123 (QLKNLDLSHNFISSFPWSDLRNLS), 124–145 (ALQLLKMNHNRLGSLPRDALGA), and 148–169 (DLRSLRINNNRLRTLAPGTFDA). Asn121 is a glycosylation site (N-linked (GlcNAc...) asparagine). The region spanning 181–232 (NPFHCGCGLVWLQAWAASTRVSLPEPDSIACASPPALQGVPVYRLPALPCAP) is the LRRCT domain. One can recognise an Ig-like domain in the interval 233–371 (PSVHLSAEPP…GANSTSIRVA (139 aa)). Cys260 and Cys355 are joined by a disulfide. Residues 287-326 (VLSGEDDGVGAEEGEGEGDGDLLTQTQAQTPTPAPAWPAP) are disordered. The segment covering 290–306 (GEDDGVGAEEGEGEGDG) has biased composition (acidic residues). Asn337 and Asn364 each carry an N-linked (GlcNAc...) asparagine glycan. The interval 375-466 (TGPPKHAPGA…QRCGNGDPSR (92 aa)) is disordered. Positions 431–449 (TETEPEEDTSEGEEAEDQI) are enriched in acidic residues. Residues Asn474 and Asn563 are each glycosylated (N-linked (GlcNAc...) asparagine). The chain crosses the membrane as a helical span at residues 590–610 (LLVIVAVSVFLLVLATVPLLG). At 611 to 745 (AACCHLLAKH…INGNYRQTAG (135 aa)) the chain is on the cytoplasmic side. A disordered region spans residues 656–722 (KSYPAGGEAG…FEAGSEYSDR (67 aa)). Positions 665-683 (GGEEPEDVQGEGLDEDAEQ) are enriched in acidic residues. Tyr719 is modified (phosphotyrosine). Residue Ser720 is modified to Phosphoserine.

As to quaternary structure, homomultimer. Interacts with NTRK1/TrkA.

It is found in the cell membrane. Functionally, required for axon extension during neural development. In Homo sapiens (Human), this protein is Immunoglobulin superfamily containing leucine-rich repeat protein 2 (ISLR2).